The chain runs to 78 residues: MAKPVLRKPKKKSNPLKSAKIEAIDYKDTVLLRKFISDRGKIRARRVTGVSVQEQRAIAKAVKNAREMALLPYSSSAR.

The protein belongs to the bacterial ribosomal protein bS18 family. As to quaternary structure, part of the 30S ribosomal subunit. Forms a tight heterodimer with protein bS6.

Its function is as follows. Binds as a heterodimer with protein bS6 to the central domain of the 16S rRNA, where it helps stabilize the platform of the 30S subunit. This chain is Small ribosomal subunit protein bS18, found in Beutenbergia cavernae (strain ATCC BAA-8 / DSM 12333 / CCUG 43141 / JCM 11478 / NBRC 16432 / NCIMB 13614 / HKI 0122).